Here is a 477-residue protein sequence, read N- to C-terminus: Cysteine--tRNA ligase (477 aa).

Cys-34 is a binding site for Zn(2+). The 'HIGH' region motif lies at 36-46 (PTVYDFAHIGN). Positions 235, 260, and 264 each coordinate Zn(2+). A 'KMSKS' region motif is present at residues 293–297 (KMSKS). Residue Lys-296 coordinates ATP.

The protein belongs to the class-I aminoacyl-tRNA synthetase family. As to quaternary structure, monomer. The cofactor is Zn(2+).

The protein localises to the cytoplasm. It catalyses the reaction tRNA(Cys) + L-cysteine + ATP = L-cysteinyl-tRNA(Cys) + AMP + diphosphate. The chain is Cysteine--tRNA ligase from Mesorhizobium japonicum (strain LMG 29417 / CECT 9101 / MAFF 303099) (Mesorhizobium loti (strain MAFF 303099)).